Reading from the N-terminus, the 610-residue chain is UvrABC system protein C (610 aa).

In terms of domain architecture, GIY-YIG spans 16–94 (SQPGVYRMYD…IKLYQPRYNV (79 aa)). The 36-residue stretch at 204–239 (DQVLTQLIARMEKASQDLAFEEAARIRDQIQAVRRV) folds into the UVR domain.

It belongs to the UvrC family. Interacts with UvrB in an incision complex.

The protein resides in the cytoplasm. Its function is as follows. The UvrABC repair system catalyzes the recognition and processing of DNA lesions. UvrC both incises the 5' and 3' sides of the lesion. The N-terminal half is responsible for the 3' incision and the C-terminal half is responsible for the 5' incision. This chain is UvrABC system protein C, found in Salmonella typhimurium (strain LT2 / SGSC1412 / ATCC 700720).